A 271-amino-acid polypeptide reads, in one-letter code: Co-chaperone protein DjlA (271 aa).

Topologically, residues 1 to 6 are periplasmic; it reads MQYWGK. The chain crosses the membrane as a helical span at residues 7 to 31; it reads IIGVAVALIMGGGFWGVVLGLLIGH. Over 32 to 271 the chain is Cytoplasmic; it reads MFDKARSRKM…ELIKQQKGFK (240 aa). One can recognise a J domain in the interval 205-271; it reads DACNVLGVKP…ELIKQQKGFK (67 aa).

As to quaternary structure, homodimer.

The protein localises to the cell inner membrane. Regulatory DnaK co-chaperone. Direct interaction between DnaK and DjlA is needed for the induction of the wcaABCDE operon, involved in the synthesis of a colanic acid polysaccharide capsule, possibly through activation of the RcsB/RcsC phosphotransfer signaling pathway. The colanic acid capsule may help the bacterium survive conditions outside the host. This Escherichia coli O6:H1 (strain CFT073 / ATCC 700928 / UPEC) protein is Co-chaperone protein DjlA.